We begin with the raw amino-acid sequence, 636 residues long: Protein BCAP (636 aa).

5 coiled-coil regions span residues 36-97 (LSCL…EQKE), 141-220 (ESEN…WNLQ), 249-325 (YKQR…HGKN), 377-484 (ISSE…ECQE), and 519-631 (LEEE…KMNS).

Belongs to the ODF2 family. In terms of tissue distribution, mainly expressed in trachea and testis. Not detected in bone marrow, bladder, leukocytes. Only weakly detected in tongue, stomach, brain and ovaries.

The protein resides in the cytoplasm. The protein localises to the cytoskeleton. Its subcellular location is the microtubule organizing center. It localises to the centrosome. It is found in the centriole. The protein resides in the centriolar satellite. The protein localises to the cilium basal body. Acts as a suppressor of ciliogenesis, specifically, the initiation of ciliogenesis. In Homo sapiens (Human), this protein is Protein BCAP.